Consider the following 545-residue polypeptide: Methionine--tRNA ligase (545 aa).

A 'HIGH' region motif is present at residues 15 to 25 (PYANGPIHIGH). Zn(2+)-binding residues include Cys-146, Cys-149, Cys-159, and Cys-162. A 'KMSKS' region motif is present at residues 332–336 (KLSKS). Lys-335 lines the ATP pocket.

It belongs to the class-I aminoacyl-tRNA synthetase family. MetG type 1 subfamily. Monomer. The cofactor is Zn(2+).

It is found in the cytoplasm. It catalyses the reaction tRNA(Met) + L-methionine + ATP = L-methionyl-tRNA(Met) + AMP + diphosphate. In terms of biological role, is required not only for elongation of protein synthesis but also for the initiation of all mRNA translation through initiator tRNA(fMet) aminoacylation. The sequence is that of Methionine--tRNA ligase (metG) from Buchnera aphidicola subsp. Schizaphis graminum (strain Sg).